Reading from the N-terminus, the 77-residue chain is Large ribosomal subunit protein uL24 (77 aa).

This sequence belongs to the universal ribosomal protein uL24 family. In terms of assembly, part of the 50S ribosomal subunit.

In terms of biological role, one of two assembly initiator proteins, it binds directly to the 5'-end of the 23S rRNA, where it nucleates assembly of the 50S subunit. One of the proteins that surrounds the polypeptide exit tunnel on the outside of the subunit. In Campylobacter jejuni subsp. doylei (strain ATCC BAA-1458 / RM4099 / 269.97), this protein is Large ribosomal subunit protein uL24.